We begin with the raw amino-acid sequence, 300 residues long: Probable protein phosphatase 2C 3 (300 aa).

The PPM-type phosphatase domain occupies 23–298 (IFAASEMQGW…DNMTTILVYL (276 aa)). 4 residues coordinate Mn(2+): Asp57, Gly58, Asp237, and Asp289.

The protein belongs to the PP2C family. The cofactor is Mg(2+). Mn(2+) serves as cofactor.

Its subcellular location is the membrane. The catalysed reaction is O-phospho-L-seryl-[protein] + H2O = L-seryl-[protein] + phosphate. It carries out the reaction O-phospho-L-threonyl-[protein] + H2O = L-threonyl-[protein] + phosphate. Functionally, enzyme with a broad specificity. The polypeptide is Probable protein phosphatase 2C 3 (Paramecium tetraurelia).